We begin with the raw amino-acid sequence, 229 residues long: Heptaprenylglyceryl phosphate synthase (229 aa).

Residue Lys12 coordinates sn-glycerol 1-phosphate. Mg(2+)-binding residues include Asp14 and Ser40. Sn-glycerol 1-phosphate is bound by residues 159 to 164 (YLEYSG), Gly189, and 209 to 210 (GN).

This sequence belongs to the GGGP/HepGP synthase family. Group I subfamily. Homodimer. Mg(2+) is required as a cofactor.

It catalyses the reaction sn-glycerol 1-phosphate + all-trans-heptaprenyl diphosphate = 3-heptaprenyl-sn-glycero-1-phosphate + diphosphate. It participates in membrane lipid metabolism; glycerophospholipid metabolism. Prenyltransferase that catalyzes in vivo the transfer of the heptaprenyl moiety of heptaprenyl pyrophosphate (HepPP; 35 carbon atoms) to the C3 hydroxyl of sn-glycerol-1-phosphate (G1P), producing heptaprenylglyceryl phosphate (HepGP). This reaction is an ether-bond-formation step in the biosynthesis of archaea-type G1P-based membrane lipids found in Bacillales. This Bacillus cereus (strain ATCC 10987 / NRS 248) protein is Heptaprenylglyceryl phosphate synthase.